The primary structure comprises 498 residues: Calcium-binding tyrosine phosphorylation-regulated protein (498 aa).

Residues 12–49 (YGLKTLLEGVSRAILKINPPNITQFAAVYFKELIVFRE) enclose the RIIa domain. Disordered stretches follow at residues 74 to 107 (GTTQ…TDTE), 135 to 164 (EETP…SPAA), and 247 to 279 (VDLG…AYDQ). Residues 145–164 (SPKPSTPKAVTPPSSPSPAA) are compositionally biased toward low complexity.

In terms of assembly, interacts with FSCB. In terms of processing, phosphorylated on tyrosine residues during in vitro capacitation. Dephosphorylation affects its ability to bind calcium. As to expression, expressed in testis.

It is found in the cytoplasm. It localises to the cytoskeleton. The protein resides in the cell projection. Its subcellular location is the cilium. The protein localises to the flagellum. Its function is as follows. May function as a regulator of both motility- and head-associated functions such as capacitation and the acrosome reaction. Binds calcium in vitro. In Vulpes vulpes (Red fox), this protein is Calcium-binding tyrosine phosphorylation-regulated protein (CABYR).